The primary structure comprises 908 residues: Glutamate receptor ionotropic, kainate 2 (908 aa).

The N-terminal stretch at 1 to 31 is a signal peptide; the sequence is MKIIFPILSNPVFRRTVKLLLCLLWIGYSQG. Residues 32-561 are Extracellular-facing; that stretch reads TTHVLRFGGI…VFSFLNPLSP (530 aa). N-linked (GlcNAc...) asparagine glycans are attached at residues N67, N73, N275, N378, N412, N423, and N430. The cysteines at positions 96 and 347 are disulfide-linked. P516, A518, and R523 together coordinate L-glutamate. N546 is a glycosylation site (N-linked (GlcNAc...) asparagine). The helical transmembrane segment at 562 to 582 threads the bilayer; sequence DIWMYVLLACLGVSCVLFVIA. Topologically, residues 583-638 are cytoplasmic; sequence RFSPYEWYNPHPCNPDSDVVENNFTLLNSFWFGVGALMRQGSELMPKALSTRIVGG. The helical transmembrane segment at 639 to 659 threads the bilayer; that stretch reads IWWFFTLIIISSYTANLAAFL. The Extracellular segment spans residues 660 to 819; that stretch reads TVERMESPID…KEASALGVQN (160 aa). 3 residues coordinate L-glutamate: A689, T690, and E738. Cysteines 750 and 804 form a disulfide. Residue N751 is glycosylated (N-linked (GlcNAc...) asparagine). A helical transmembrane segment spans residues 820-840; the sequence is IGGIFIVLAAGLVLSVFVAVG. Residues 841–908 are Cytoplasmic-facing; it reads EFLYKSKKNA…RRLPGKETMA (68 aa). Phosphoserine; by PKC occurs at positions 846 and 868. K886 is covalently cross-linked (Glycyl lysine isopeptide (Lys-Gly) (interchain with G-Cter in SUMO1)).

The protein belongs to the glutamate-gated ion channel (TC 1.A.10.1) family. GRIK2 subfamily. As to quaternary structure, homotetramer and heterotetramer with GRIK5. Tetramers may be formed by the dimerization of dimers. Assembles into a kainate-gated homomeric channel that does not bind AMPA. Can form functional heteromeric receptors with GRIK3, GRIK4 and GRIK5. Interacts with NETO2. Interacts with DLG4. Interacts with NETO2. Interacts (via C-terminus) with KLHL17 (via kelch repeats); the interaction targets GRIK2 for degradation via ubiquitin-proteasome pathway. Sumoylation mediates kainate receptor-mediated endocytosis and regulates synaptic transmission. Sumoylation is enhanced by PIAS3 and desumoylated by SENP1. Post-translationally, ubiquitinated. Ubiquitination regulates the GRIK2 levels at the synapse by leading kainate receptor degradation through proteasome. In terms of processing, phosphorylated by PKC at Ser-868 upon agonist activation, this directly enhance sumoylation.

The protein resides in the cell membrane. Its subcellular location is the postsynaptic cell membrane. It catalyses the reaction Ca(2+)(in) = Ca(2+)(out). The enzyme catalyses Na(+)(in) = Na(+)(out). With respect to regulation, cold receptor activity activated by temperatures between 10-19 degrees Celsius. Ionotropic glutamate receptor that functions as a cation-permeable ligand-gated ion channel, gated by L-glutamate and the glutamatergic agonist kainic acid. L-glutamate acts as an excitatory neurotransmitter at many synapses in the central nervous system. Binding of the excitatory neurotransmitter L-glutamate induces a conformation change, leading to the opening of the cation channel, and thereby converts the chemical signal to an electrical impulse. The receptor then desensitizes rapidly and enters a transient inactive state, characterized by the presence of bound agonist. Modulates cell surface expression of NETO2. In association with GRIK3, involved in presynaptic facilitation of glutamate release at hippocampal mossy fiber synapses. In terms of biological role, independent of its ionotropic glutamate receptor activity, acts as a thermoreceptor conferring sensitivity to cold temperatures. Functions in dorsal root ganglion neurons. In Macaca fascicularis (Crab-eating macaque), this protein is Glutamate receptor ionotropic, kainate 2 (GRIK2).